We begin with the raw amino-acid sequence, 336 residues long: Dihydroorotate dehydrogenase (quinone) (336 aa).

FMN-binding positions include 62 to 66 and T86; that span reads AGLDK. K66 provides a ligand contact to substrate. 111–115 lines the substrate pocket; it reads NRMGF. N139 and N172 together coordinate FMN. N172 lines the substrate pocket. Catalysis depends on S175, which acts as the Nucleophile. N177 serves as a coordination point for substrate. K217 and T245 together coordinate FMN. Substrate is bound at residue 246-247; the sequence is NT. Residues G268, G297, and 318–319 contribute to the FMN site; that span reads YS.

This sequence belongs to the dihydroorotate dehydrogenase family. Type 2 subfamily. In terms of assembly, monomer. FMN is required as a cofactor.

The protein localises to the cell membrane. It catalyses the reaction (S)-dihydroorotate + a quinone = orotate + a quinol. Its pathway is pyrimidine metabolism; UMP biosynthesis via de novo pathway; orotate from (S)-dihydroorotate (quinone route): step 1/1. Functionally, catalyzes the conversion of dihydroorotate to orotate with quinone as electron acceptor. The sequence is that of Dihydroorotate dehydrogenase (quinone) from Vibrio vulnificus (strain YJ016).